Reading from the N-terminus, the 497-residue chain is Probable cytosol aminopeptidase (497 aa).

Mn(2+) contacts are provided by Lys-268 and Asp-273. Lys-280 is an active-site residue. Mn(2+) is bound by residues Asp-291, Asp-350, and Glu-352. Arg-354 is a catalytic residue.

The protein belongs to the peptidase M17 family. Requires Mn(2+) as cofactor.

Its subcellular location is the cytoplasm. It catalyses the reaction Release of an N-terminal amino acid, Xaa-|-Yaa-, in which Xaa is preferably Leu, but may be other amino acids including Pro although not Arg or Lys, and Yaa may be Pro. Amino acid amides and methyl esters are also readily hydrolyzed, but rates on arylamides are exceedingly low.. The catalysed reaction is Release of an N-terminal amino acid, preferentially leucine, but not glutamic or aspartic acids.. Functionally, presumably involved in the processing and regular turnover of intracellular proteins. Catalyzes the removal of unsubstituted N-terminal amino acids from various peptides. The protein is Probable cytosol aminopeptidase of Alkalilimnicola ehrlichii (strain ATCC BAA-1101 / DSM 17681 / MLHE-1).